Reading from the N-terminus, the 331-residue chain is Thiamine thiazole synthase (331 aa).

Substrate-binding positions include Cys-86, 107–108 (EA), Gly-115, and Val-183. Cys-220 is subject to 2,3-didehydroalanine (Cys). Substrate-binding positions include Asp-222, His-237, Met-289, and 299–301 (RMG).

The protein belongs to the THI4 family. As to quaternary structure, homooctamer. The cofactor is Fe cation. During the catalytic reaction, a sulfide is transferred from Cys-220 to a reaction intermediate, generating a dehydroalanine residue.

Its subcellular location is the cytoplasm. The protein resides in the nucleus. The catalysed reaction is [ADP-thiazole synthase]-L-cysteine + glycine + NAD(+) = [ADP-thiazole synthase]-dehydroalanine + ADP-5-ethyl-4-methylthiazole-2-carboxylate + nicotinamide + 3 H2O + 2 H(+). Functionally, involved in biosynthesis of the thiamine precursor thiazole. Catalyzes the conversion of NAD and glycine to adenosine diphosphate 5-(2-hydroxyethyl)-4-methylthiazole-2-carboxylic acid (ADT), an adenylated thiazole intermediate. The reaction includes an iron-dependent sulfide transfer from a conserved cysteine residue of the protein to a thiazole intermediate. The enzyme can only undergo a single turnover, which suggests it is a suicide enzyme. May have additional roles in adaptation to various stress conditions and in DNA damage tolerance. In Emericella nidulans (strain FGSC A4 / ATCC 38163 / CBS 112.46 / NRRL 194 / M139) (Aspergillus nidulans), this protein is Thiamine thiazole synthase.